Reading from the N-terminus, the 235-residue chain is Probable transcriptional regulatory protein MPN_478 (235 aa).

It belongs to the TACO1 family.

The protein localises to the cytoplasm. This is Probable transcriptional regulatory protein MPN_478 from Mycoplasma pneumoniae (strain ATCC 29342 / M129 / Subtype 1) (Mycoplasmoides pneumoniae).